The sequence spans 200 residues: Imidazole glycerol phosphate synthase subunit HisH (200 aa).

Residues 3-200 enclose the Glutamine amidotransferase type-1 domain; that stretch reads DVALIDAGGA…LRNFLEMSFP (198 aa). C78 (nucleophile) is an active-site residue. Active-site residues include H179 and E181.

Heterodimer of HisH and HisF.

It is found in the cytoplasm. It catalyses the reaction 5-[(5-phospho-1-deoxy-D-ribulos-1-ylimino)methylamino]-1-(5-phospho-beta-D-ribosyl)imidazole-4-carboxamide + L-glutamine = D-erythro-1-(imidazol-4-yl)glycerol 3-phosphate + 5-amino-1-(5-phospho-beta-D-ribosyl)imidazole-4-carboxamide + L-glutamate + H(+). The catalysed reaction is L-glutamine + H2O = L-glutamate + NH4(+). The protein operates within amino-acid biosynthesis; L-histidine biosynthesis; L-histidine from 5-phospho-alpha-D-ribose 1-diphosphate: step 5/9. In terms of biological role, IGPS catalyzes the conversion of PRFAR and glutamine to IGP, AICAR and glutamate. The HisH subunit catalyzes the hydrolysis of glutamine to glutamate and ammonia as part of the synthesis of IGP and AICAR. The resulting ammonia molecule is channeled to the active site of HisF. The protein is Imidazole glycerol phosphate synthase subunit HisH of Xanthomonas axonopodis pv. citri (strain 306).